The primary structure comprises 441 residues: Histidinol dehydrogenase (441 aa).

NAD(+) contacts are provided by Tyr-136, Gln-197, and Asn-220. Residues Ser-243, Gln-265, and His-268 each contribute to the substrate site. Gln-265 and His-268 together coordinate Zn(2+). Catalysis depends on proton acceptor residues Glu-333 and His-334. Residues His-334, Asp-367, Glu-421, and His-426 each coordinate substrate. Asp-367 contributes to the Zn(2+) binding site. A Zn(2+)-binding site is contributed by His-426.

This sequence belongs to the histidinol dehydrogenase family. Requires Zn(2+) as cofactor.

The catalysed reaction is L-histidinol + 2 NAD(+) + H2O = L-histidine + 2 NADH + 3 H(+). The protein operates within amino-acid biosynthesis; L-histidine biosynthesis; L-histidine from 5-phospho-alpha-D-ribose 1-diphosphate: step 9/9. Its function is as follows. Catalyzes the sequential NAD-dependent oxidations of L-histidinol to L-histidinaldehyde and then to L-histidine. The chain is Histidinol dehydrogenase from Pseudomonas putida (strain ATCC 47054 / DSM 6125 / CFBP 8728 / NCIMB 11950 / KT2440).